The following is a 655-amino-acid chain: Alpha-L-iduronidase (655 aa).

Residues 1–25 (MRPPGPRAPGLALLAALLAAPRALA) form the signal peptide. Residues proline 53, leucine 55, and histidine 57 each coordinate alpha-D-mannopyranose. Residue histidine 90 participates in alpha-L-iduronate binding. An N-linked (GlcNAc...) asparagine glycan is attached at asparagine 109. Alpha-L-iduronate-binding residues include asparagine 180 and glutamate 181. Residue glutamate 181 is the Proton donor of the active site. N-linked (GlcNAc...) asparagine glycosylation is found at asparagine 189 and asparagine 242. 3 residues coordinate alpha-L-iduronate: lysine 263, glutamate 298, and glycine 304. Glutamate 298 (nucleophile) is an active-site residue. An alpha-D-mannopyranose-binding site is contributed by tryptophan 305. N-linked (GlcNAc...) asparagine glycosylation occurs at asparagine 335. 2 residues coordinate alpha-L-iduronate: aspartate 348 and arginine 362. 2 N-linked (GlcNAc...) asparagine glycosylation sites follow: asparagine 371 and asparagine 414. The cysteines at positions 540 and 576 are disulfide-linked.

Belongs to the glycosyl hydrolase 39 family. In terms of assembly, monomer. A smaller 63 kDa protein probably arises from IDUA protein by proteolytic cleavage. Post-translationally, N-glycosylation contributes to substrate binding and is required for full enzymatic activity. As to expression, detected in testis (at protein level). Expressed ubiquitously.

It is found in the lysosome. It carries out the reaction Hydrolysis of unsulfated alpha-L-iduronosidic linkages in dermatan sulfate.. This is Alpha-L-iduronidase (IDUA) from Canis lupus familiaris (Dog).